Here is a 251-residue protein sequence, read N- to C-terminus: Hydroxyacylglutathione hydrolase (251 aa).

Residues His54, His56, Asp58, His59, His113, Asp140, and His178 each coordinate Zn(2+).

The protein belongs to the metallo-beta-lactamase superfamily. Glyoxalase II family. As to quaternary structure, monomer. It depends on Zn(2+) as a cofactor.

The catalysed reaction is an S-(2-hydroxyacyl)glutathione + H2O = a 2-hydroxy carboxylate + glutathione + H(+). Its pathway is secondary metabolite metabolism; methylglyoxal degradation; (R)-lactate from methylglyoxal: step 2/2. Thiolesterase that catalyzes the hydrolysis of S-D-lactoyl-glutathione to form glutathione and D-lactic acid. This chain is Hydroxyacylglutathione hydrolase, found in Synechococcus sp. (strain CC9902).